The following is a 934-amino-acid chain: MAKDNKDVTEAPVNFGANLGLMLDLYDDYLQDPSSVPDDLQVLFSTIKNGEAHVAAKSTTEGSGSSAGDGTIKRIMRLIDNIRQYGHLKADIYPVNAPKRTNLPKLEIEEFNLDKETLENVSAEIVSDHFKDIYDNAYEAIERMEKRYKGPIAFEYNHINNNKERTWLKRRIETPYRANINNDERKKLFDTLAHVEGFEKYLHKNFVGAKRFSIEGVDTLVPMLQHTLKRAAEIEINNIQIGMAHRGRLNVLTHVLEKPYEMMISEFMHTDPMKFLPEDGSLELTAGWTGDVKYHLGGVKTTSSYGIEQRISLANNPSHLEIVAPVVIGKTRASQDDTKHAGKPTTDFHKGMPIIIHGDAAYPGQGINFETMNLSNLDGYSTGGALHIITNNRIGFTTEPVDGRSTTYSTDIAKGYDVPILHVNADDVEATIEAIDIAMEFRKEFHKDFVIDLVGYRRYGHNEMDEPSITNPLPYHNIRKHDSVEIIYGNKLVEDGVISKEQMEDVMDKVQKEMRAAQDKIDKSDKMDNPDMERPESLQEPLQSDDKDFSVDHLKEINDAMLTYPEDFHVLKKLNKVLEKRREPFESENGLVDWAQAEQLAFATIVQDGISVRLTGQDSERGTFSHRHAVLHDEENGDTFTPLHHVPNQKATFEVHNSPLSEAAVVGFEYGYNVENKNSMNIWEAQYGDFSNMAQMMFDNFMSSARAKWGERSGLTLFLPHAFEGQGPEHSSARLERFLQLAAENNSTVVNLSSSSNYFHLLRAQAKSLGTEAMRPLIVMSPKSLLRNKTVAKPIDQFTSGGFKPIIVEDGNKEKVTKLVLASGKMFIDLKEHLAKNPDDSILLVAVDRLYPFPEGEIKEVLNELPNLETVSWVQEEPKNQGAWLFVYPYLKSLVGNQFNLSYHGRIQRAAPAEGDGEIHKLVQNQIIESSIEK.

A compositionally biased stretch (basic and acidic residues) spans 515-537; it reads RAAQDKIDKSDKMDNPDMERPES. The interval 515 to 544 is disordered; it reads RAAQDKIDKSDKMDNPDMERPESLQEPLQS.

The protein belongs to the alpha-ketoglutarate dehydrogenase family. As to quaternary structure, homodimer. Part of the 2-oxoglutarate dehydrogenase (OGDH) complex composed of E1 (2-oxoglutarate dehydrogenase), E2 (dihydrolipoamide succinyltransferase) and E3 (dihydrolipoamide dehydrogenase); the complex contains multiple copies of the three enzymatic components (E1, E2 and E3). Thiamine diphosphate serves as cofactor.

The enzyme catalyses N(6)-[(R)-lipoyl]-L-lysyl-[protein] + 2-oxoglutarate + H(+) = N(6)-[(R)-S(8)-succinyldihydrolipoyl]-L-lysyl-[protein] + CO2. Functionally, E1 component of the 2-oxoglutarate dehydrogenase (OGDH) complex which catalyzes the decarboxylation of 2-oxoglutarate, the first step in the conversion of 2-oxoglutarate to succinyl-CoA and CO(2). The sequence is that of 2-oxoglutarate dehydrogenase E1 component from Staphylococcus haemolyticus (strain JCSC1435).